A 346-amino-acid polypeptide reads, in one-letter code: DNA repair protein XRCC3 (346 aa).

An N-acetylmethionine modification is found at Met1. Residue 107–114 participates in ATP binding; the sequence is GRSSAGKT.

Belongs to the RecA family. RAD51 subfamily. As to quaternary structure, interacts with RAD51C and RAD51. Part of the CX3 complex consisting of RAD51C and XRCC3; the complex has a ring-like structure arranged into a flat disk around a central channel; CX3 can interact with RAD51 in vitro. Forms a complex with FANCD2, BRCA2 and phosphorylated FANCG. Interacts with SWSAP1 and ZSWIM7; involved in homologous recombination repair. Interacts directly with PALB2 which may serve as a scaffold for a HR complex containing PALB2, BRCA2, RAD51C, RAD51 and XRCC3.

Its subcellular location is the nucleus. It is found in the cytoplasm. The protein localises to the perinuclear region. The protein resides in the mitochondrion. In terms of biological role, involved in the homologous recombination repair (HRR) pathway of double-stranded DNA, thought to repair chromosomal fragmentation, translocations and deletions. Part of the RAD51 paralog protein complex CX3 which acts in the BRCA1-BRCA2-dependent HR pathway. Upon DNA damage, CX3 acts downstream of RAD51 recruitment; the complex binds predominantly to the intersection of the four duplex arms of the Holliday junction (HJ) and to junctions of replication forks. Involved in HJ resolution and thus in processing HR intermediates late in the DNA repair process; the function may be linked to the CX3 complex and seems to involve GEN1 during mitotic cell cycle progression. Part of a PALB2-scaffolded HR complex containing BRCA2 and RAD51C and which is thought to play a role in DNA repair by HR. Plays a role in regulating mitochondrial DNA copy number under conditions of oxidative stress in the presence of RAD51 and RAD51C. This Homo sapiens (Human) protein is DNA repair protein XRCC3 (XRCC3).